The primary structure comprises 236 residues: Class B acid phosphatase (236 aa).

The N-terminal stretch at 1–22 (MKNVMKLSVIALLTAAAVPAMA) is a signal peptide. The active-site Nucleophile is the aspartate 67. Residues aspartate 67 and aspartate 69 each coordinate Mg(2+). Residue aspartate 69 is the Proton donor of the active site. Substrate is bound by residues 136 to 137 (TG) and lysine 176. Aspartate 191 provides a ligand contact to Mg(2+).

It belongs to the class B bacterial acid phosphatase family. In terms of assembly, homotetramer. It depends on Mg(2+) as a cofactor.

The protein localises to the periplasm. It catalyses the reaction a phosphate monoester + H2O = an alcohol + phosphate. Its function is as follows. Dephosphorylates several organic phosphate monoesters. Also has a phosphotransferase activity catalyzing the transfer of low-energy phosphate groups from organic phosphate monoesters to free hydroxyl groups of various organic compounds. This Haemophilus influenzae (strain ATCC 51907 / DSM 11121 / KW20 / Rd) protein is Class B acid phosphatase (aphA).